The following is a 63-amino-acid chain: Anionic peptide 10.1 (63 aa).

Positions 1–20 (MISRFCLLFLLVFVVSKIQA) are cleaved as a signal peptide.

The protein belongs to the non-disulfide-bridged peptide (NDBP) superfamily. Long chain multifunctional peptide (group 2) family. As to expression, expressed by the venom gland.

It is found in the secreted. In Lychas mucronatus (Chinese swimming scorpion), this protein is Anionic peptide 10.1.